Consider the following 296-residue polypeptide: MAVNDSVNILNSAYLAVEYIDSFLPDNPLQQPFKNAWNYMLDNYTKFQIATWGSLLVHEASYFLLCVPGFIFQFIPYMQKYKIQPDKPETWEKQWKCFKTLIFNHFFIQLPLICGTYYFTEYFNIPYEWEEMPRWYVLLAQCFGCAVIEDAWHYFLHRLLHHKRIYKYIHKVHHEFVSPFGMQAEYAHPLETLILGAGFFIGIVVFCNHVVLLWAWVICRLMETIDVHSGYDIPLNPLHLVPFYAGARFHDFHHMNFIGNYASTFTWWDRIFGTDSQFIAYKEKEKKQQLRMKKTN.

Helical transmembrane passes span 55-75 and 100-120; these read LLVH…FQFI and TLIF…YYFT. The region spanning 145–274 is the Fatty acid hydroxylase domain; sequence CAVIEDAWHY…FTWWDRIFGT (130 aa). The short motif at 157 to 161 is the Histidine box-1 element; sequence HRLLH. Residues 170-174 carry the Histidine box-2 motif; that stretch reads HKVHH. Residues 199 to 219 form a helical membrane-spanning segment; it reads FFIGIVVFCNHVVLLWAWVIC. Residues 249–255 carry the Histidine box-3 motif; that stretch reads FHDFHHM.

It belongs to the sterol desaturase family. It depends on Fe cation as a cofactor.

The protein localises to the endoplasmic reticulum membrane. The enzyme catalyses 4,4-dimethyl-5alpha-cholest-7-en-3beta-ol + 6 Fe(II)-[cytochrome b5] + 3 O2 + 5 H(+) = 4alpha-carboxy-4beta-methyl-5alpha-cholest-7-ene-3beta-ol + 6 Fe(III)-[cytochrome b5] + 4 H2O. Its pathway is steroid biosynthesis; zymosterol biosynthesis; zymosterol from lanosterol: step 3/6. Its function is as follows. Catalyzes the first step in the removal of the two C-4 methyl groups of 4,4-dimethylzymosterol. This chain is Methylsterol monooxygenase 1 (MSMO1), found in Gallus gallus (Chicken).